We begin with the raw amino-acid sequence, 203 residues long: Imidazoleglycerol-phosphate dehydratase (203 aa).

It belongs to the imidazoleglycerol-phosphate dehydratase family.

It is found in the cytoplasm. The enzyme catalyses D-erythro-1-(imidazol-4-yl)glycerol 3-phosphate = 3-(imidazol-4-yl)-2-oxopropyl phosphate + H2O. It participates in amino-acid biosynthesis; L-histidine biosynthesis; L-histidine from 5-phospho-alpha-D-ribose 1-diphosphate: step 6/9. This chain is Imidazoleglycerol-phosphate dehydratase, found in Parvibaculum lavamentivorans (strain DS-1 / DSM 13023 / NCIMB 13966).